The sequence spans 144 residues: MLQPKKTKFRRQQKGRMKGEAQRGNQLAFGSFGIKSLENKWITGRQIEAARIAVTRYMQRQGQVWVRIFPDKPITKKPAEVRMGKGKGNPEGFVAPVTPGRLIFEIEGVPFDIAKEALRLAAQKLPVTTKFVVRRDYDMQNQNA.

Residues 1–16 (MLQPKKTKFRRQQKGR) are compositionally biased toward basic residues. The disordered stretch occupies residues 1 to 22 (MLQPKKTKFRRQQKGRMKGEAQ).

The protein belongs to the universal ribosomal protein uL16 family. Part of the 50S ribosomal subunit.

Its function is as follows. Binds 23S rRNA and is also seen to make contacts with the A and possibly P site tRNAs. The protein is Large ribosomal subunit protein uL16 of Parabacteroides distasonis (strain ATCC 8503 / DSM 20701 / CIP 104284 / JCM 5825 / NCTC 11152).